A 250-amino-acid chain; its full sequence is Protein orai-2 (250 aa).

The next 4 helical transmembrane spans lie at 66-83, 94-114, 148-168, and 192-212; these read TSAL…EVQL, LIAF…ALLI, LAWG…VVLL, and AALV…VFTI.

This sequence belongs to the Orai family. As to quaternary structure, oligomerizes in homomeric and heteromeric ORAI complexes. Native CRAC channels most likely consist of hexameric ORAI heteromers, implying that diverse ORAI1, ORAI2 and ORAI3 subunit combinations with distinct biophysical properties can operate in a cell-type specific way. Interacts with STIM1; this regulates channel activity. Interacts with CRACR2A/EFCAB4B.

It is found in the cell membrane. It catalyses the reaction Ca(2+)(in) = Ca(2+)(out). Its activity is regulated as follows. CRAC channels are regulated by fast Ca(2+)-dependent inactivation (FCDI), a mechanism that limits Ca(2+) influx and cell toxicity. ORAI2 channels display prominent FCDI. Inhibited by lanthanides such as Gd(3+) ions. Its function is as follows. Pore-forming subunit of inward rectifying Ca(2+) release-activated Ca(2+) (CRAC) channels. Assembles with ORAI1 and ORAI3 to form hexameric CRAC channels that mediate Ca(2+) influx upon depletion of endoplasmic reticulum Ca(2+) store and channel activation by Ca(2+) sensor STIM1, a process known as store-operated Ca(2+) entry (SOCE). Various pore subunit combinations may account for distinct CRAC channel spatiotemporal and cell-type specific dynamics. ORAI1 mainly contributes to the generation of Ca(2+) plateaus involved in sustained Ca(2+) entry and is dispensable for cytosolic Ca(2+) oscillations, whereas ORAI2 and ORAI3 generate oscillatory patterns. CRAC channels assemble in Ca(2+) signaling microdomains where Ca(2+) influx is coupled to calmodulin and calcineurin signaling and activation of NFAT transcription factors recruited to ORAI1 via AKAP5. CRAC channels are the main pathway for Ca(2+) influx in T cells and promote the immune response to pathogens by activating NFAT-dependent cytokine and chemokine transcription. This Mus musculus (Mouse) protein is Protein orai-2 (Orai2).